The following is a 650-amino-acid chain: Histone-lysine N-methyltransferase family member SUVH9 (650 aa).

Disordered regions lie at residues 1–24 (MGSS…KLEP) and 95–129 (PVEE…RSSE). Residues 7–20 (PLDPSLNPSPSLIP) show a composition bias toward low complexity. The span at 107–118 (YSTSDSSPSVAT) shows a compositional bias: polar residues. A YDG domain is found at 205–352 (GSIPGVQVGD…FGVFKYRLER (148 aa)). The Pre-SET domain occupies 432-490 (SGCDCVNGCGSGCLCEAKNSGEIAYDYNGTLIRQKPLIHECGSACQCPPSCRNRVTQKG). Zn(2+) contacts are provided by Cys434, Cys436, Cys440, Cys444, Cys446, Cys472, Cys476, Cys478, and Cys482. The region spanning 493-637 (NRLEVFRSLE…PMTELSLDYG (145 aa)) is the SET domain.

It belongs to the class V-like SAM-binding methyltransferase superfamily. Histone-lysine methyltransferase family. Suvar3-9 subfamily. Component of an RNA-directed DNA methylation (RdDM) complex that contains at least MORC6, MORC1/CRT1, MORC2, SWI3D and SUVH9. Interacts directly with MORC6, MORC2 and MORC1/CRT1. Interacts with SWI3B, SWI3C and SWI3D.

Its subcellular location is the nucleus. The protein resides in the chromosome. It localises to the centromere. Functionally, histone methyltransferase family member that plays a role in gene silencing. Together with MORC6 and SUVH2, regulates the silencing of some transposable elements (TEs). According to PubMed:19043555, the protein does not bind S-adenosyl-L-methionine and lacks methyltransferase activity. Instead, it may function downstream of DRM2 in RNA-directed DNA methylation, binding to methylated DNA and recruiting DNA-directed RNA polymerase V to chromatin. The sequence is that of Histone-lysine N-methyltransferase family member SUVH9 (SUVH9) from Arabidopsis thaliana (Mouse-ear cress).